The following is a 153-amino-acid chain: MTERKGMEEINREEFQEVVVNVGRVTKVVKGGRRFRFNALVVVGNKNGLVGFGLGKAKEVPDAIKKAVDDAFKNLIHVTIKGTTIAHDIEHKYNASRILLKPASEGTGVIAGGSTRPIVELAGIKDILTKSLGSNNPYNVVHATFDALAKIKA.

Positions 15–78 (FQEVVVNVGR…DDAFKNLIHV (64 aa)) constitute an S5 DRBM domain.

It belongs to the universal ribosomal protein uS5 family. In terms of assembly, part of the 30S ribosomal subunit. Contacts proteins S4 and S8.

With S4 and S12 plays an important role in translational accuracy. Functionally, located at the back of the 30S subunit body where it stabilizes the conformation of the head with respect to the body. The sequence is that of Small ribosomal subunit protein uS5 from Helicobacter acinonychis (strain Sheeba).